We begin with the raw amino-acid sequence, 98 residues long: NADH-ubiquinone oxidoreductase chain 4L (98 aa).

Helical transmembrane passes span 1–21 (MSLT…GLLM), 29–49 (SLLC…MTIL), and 61–81 (IILL…LVMV).

This sequence belongs to the complex I subunit 4L family. Core subunit of respiratory chain NADH dehydrogenase (Complex I) which is composed of 45 different subunits.

The protein resides in the mitochondrion inner membrane. It carries out the reaction a ubiquinone + NADH + 5 H(+)(in) = a ubiquinol + NAD(+) + 4 H(+)(out). In terms of biological role, core subunit of the mitochondrial membrane respiratory chain NADH dehydrogenase (Complex I) which catalyzes electron transfer from NADH through the respiratory chain, using ubiquinone as an electron acceptor. Part of the enzyme membrane arm which is embedded in the lipid bilayer and involved in proton translocation. The polypeptide is NADH-ubiquinone oxidoreductase chain 4L (MT-ND4L) (Vampyressa brocki (Brock's yellow-eared bat)).